Here is a 496-residue protein sequence, read N- to C-terminus: Membrane-bound lytic murein transglycosylase F (496 aa).

The N-terminal stretch at 1 to 31 is a signal peptide; that stretch reads MPIFSTRVLTYLRCIFRLFIGLMLLLTLVGC. Residues 32–271 are non-LT domain; the sequence is DFYTPSSQLE…KLDEKYFGHV (240 aa). Residues 273 to 496 form an LT domain region; the sequence is NFDFVDTRTF…AEVVKQITLR (224 aa). The active site involves E316. Residues 464–485 are disordered; that stretch reads HRREELDEDDSSEPQSTERPTV.

It in the N-terminal section; belongs to the bacterial solute-binding protein 3 family. The protein in the C-terminal section; belongs to the transglycosylase Slt family.

The protein localises to the cell outer membrane. It catalyses the reaction Exolytic cleavage of the (1-&gt;4)-beta-glycosidic linkage between N-acetylmuramic acid (MurNAc) and N-acetylglucosamine (GlcNAc) residues in peptidoglycan, from either the reducing or the non-reducing ends of the peptidoglycan chains, with concomitant formation of a 1,6-anhydrobond in the MurNAc residue.. In terms of biological role, murein-degrading enzyme that degrades murein glycan strands and insoluble, high-molecular weight murein sacculi, with the concomitant formation of a 1,6-anhydromuramoyl product. Lytic transglycosylases (LTs) play an integral role in the metabolism of the peptidoglycan (PG) sacculus. Their lytic action creates space within the PG sacculus to allow for its expansion as well as for the insertion of various structures such as secretion systems and flagella. This is Membrane-bound lytic murein transglycosylase F from Aeromonas salmonicida (strain A449).